The chain runs to 209 residues: Kynurenine formamidase (209 aa).

A substrate-binding site is contributed by tryptophan 18. Zn(2+) is bound by residues histidine 48, histidine 52, and aspartate 54. Histidine 58 serves as the catalytic Proton donor/acceptor. The Zn(2+) site is built by histidine 160 and glutamate 172.

This sequence belongs to the Cyclase 1 superfamily. KynB family. In terms of assembly, homodimer. Requires Zn(2+) as cofactor.

It catalyses the reaction N-formyl-L-kynurenine + H2O = L-kynurenine + formate + H(+). It functions in the pathway amino-acid degradation; L-tryptophan degradation via kynurenine pathway; L-kynurenine from L-tryptophan: step 2/2. In terms of biological role, catalyzes the hydrolysis of N-formyl-L-kynurenine to L-kynurenine, the second step in the kynurenine pathway of tryptophan degradation. This chain is Kynurenine formamidase, found in Paraburkholderia phymatum (strain DSM 17167 / CIP 108236 / LMG 21445 / STM815) (Burkholderia phymatum).